A 288-amino-acid polypeptide reads, in one-letter code: Type II iodothyronine deiodinase (288 aa).

The Lumenal segment spans residues 1-5 (MPHVN). The chain crosses the membrane as a helical; Signal-anchor for type III membrane protein span at residues 6–26 (LLVVLLILPGVFSNCLFLALY). The Cytoplasmic portion of the chain corresponds to 27-288 (DAVSFLRRAL…SFLESVKASR (262 aa)). Residues 99-130 (SCAASSSSSHETPTPRTTAEAAATVTTSTTTT) form a disordered region. The active site involves Sec160. A non-standard amino acid (selenocysteine) is located at residue Sec160.

It belongs to the iodothyronine deiodinase family. Predominantly monomer. Can form homodimers but homodimerization is not essential for enzyme activity. As to expression, expressed in intestine, liver, kidney and brain of immediately premetamorphic larvae, of larvae in all stages of metamorphosis and of parasitic feeding juveniles. In immediately premetamorphic larvae, levels are significantly higher in intestine and liver than in kidney and brain.

It is found in the endoplasmic reticulum membrane. The enzyme catalyses 3,3',5-triiodo-L-thyronine + iodide + A + H(+) = L-thyroxine + AH2. It carries out the reaction 3,3'-diiodo-L-thyronine + iodide + A + H(+) = 3,3',5'-triiodo-L-thyronine + AH2. The catalysed reaction is 3'-iodo-L-thyronine + iodide + A + H(+) = 3',5'-diiodo-L-thyronine + AH2. It catalyses the reaction 3,3'-diiodothyronamine + iodide + A + H(+) = 3,3',5'-triiodothyronamine + AH2. The enzyme catalyses 3'-iodothyronamine + iodide + A + H(+) = 3',5'-diiodothyronamine + AH2. Its function is as follows. Plays a crucial role in the metabolism of thyroid hormones (TH) and has specific roles in TH activation and inactivation by deiodination. Catalyzes the deiodination of L-thyroxine (T4) to 3,5,3'-triiodothyronine (T3), 3,3',5'-triiodothyronine (rT3) to 3,3'-diiodothyronine (3,3'-T2) and 3',5'-diiodothyronine (3',5'-T2) to 3'-monoiodothyronine (3'-T1) via outer-ring deiodination (ORD). Catalyzes the phenolic ring deiodinations of 3,3',5'-triiodothyronamine and 3',5'- diiodothyronamine. The chain is Type II iodothyronine deiodinase from Petromyzon marinus (Sea lamprey).